The chain runs to 374 residues: DNA/RNA-binding protein ALBA4 (374 aa).

The protein belongs to the histone-like Alba family.

The protein resides in the cytoplasm. It is found in the cell cortex. The protein localises to the perinuclear region. In terms of biological role, possesses DNA- and RNA-binding activities. Binds to DNA with relaxed sequence specificity. May associate with the subtelomeric TARE6 repeats. Regulates the abundance of transcript sub-populations in a stage-specific manner. Regulates activation of male gametocytes. Participates in the coordination of sporozoite development in the oocyst. In Plasmodium yoelii yoelii, this protein is DNA/RNA-binding protein ALBA4.